The following is a 284-amino-acid chain: MLKDYLEITKPRIIIGNIILIIGSFLFSSFPFFNVFLFFFTILGTSLVIASSCIFNNLIDIDIDTKMNRTKNRVLVKNLISPTSASIFASFIGIVGFFILGLFVNILSMFLSFIGFVIYVFFYTFFLKRKSMYSTFIGSFSGSIPSVIGHTAISNSIDLFCFLLFIIFIFWQMSHFYAIAILYINDYRKANLPFFPVVKGILKTKKHIFYYITCFIIASSMLTFLGYLSYIFLLFFSFFSFYWLYISYLSIREKDDRKFSSKLFYYSIAVVILFNFLISIDFIF.

8 consecutive transmembrane segments (helical) span residues I13–F33, V35–F55, I87–L107, S108–K128, Y133–I153, F162–L182, F224–L244, and F264–F284.

This sequence belongs to the UbiA prenyltransferase family. Protoheme IX farnesyltransferase subfamily.

It localises to the cell membrane. The catalysed reaction is heme b + (2E,6E)-farnesyl diphosphate + H2O = Fe(II)-heme o + diphosphate. The protein operates within porphyrin-containing compound metabolism; heme O biosynthesis; heme O from protoheme: step 1/1. In terms of biological role, converts heme B (protoheme IX) to heme O by substitution of the vinyl group on carbon 2 of heme B porphyrin ring with a hydroxyethyl farnesyl side group. This chain is Protoheme IX farnesyltransferase, found in Buchnera aphidicola subsp. Schizaphis graminum (strain Sg).